The chain runs to 1281 residues: Zinc finger transcription factor Trps1 (1281 aa).

Disordered stretches follow at residues 1-101 (MVRK…VSFP) and 116-204 (PAAG…KGDL). Polar residues-rich tracts occupy residues 21–31 (LEPTATESKVS) and 40–49 (DQMSENTDQS). Lysine 29 participates in a covalent cross-link: Glycyl lysine isopeptide (Lys-Gly) (interchain with G-Cter in SUMO2). Residues serine 90 and serine 127 each carry the phosphoserine modification. Positions 148-162 (LETKEEHKMSPKATE) are enriched in basic and acidic residues. The span at 166 to 189 (PVQSGQANCQGLSPVSVASKNPQV) shows a compositional bias: polar residues. Phosphoserine occurs at positions 178 and 216. The C2H2-type 1; atypical zinc-finger motif lies at 222–247 (FKCNICGYGYYGNDPTDLIKHFRKYH). Residue lysine 263 forms a Glycyl lysine isopeptide (Lys-Gly) (interchain with G-Cter in SUMO2) linkage. The C2H2-type 2; atypical zinc finger occupies 333 to 358 (FRCKFCNFTYMGNSSTELEQHFLQTH). The disordered stretch occupies residues 365–393 (SLPSSEGVKPSEKNSNKSIPALRASDSGD). Residues lysine 418, lysine 457, lysine 474, and lysine 488 each participate in a glycyl lysine isopeptide (Lys-Gly) (interchain with G-Cter in SUMO2) cross-link. The tract at residues 484–515 (NDLAKSVEGEPLTKPEKGLSGAKKKDFPSKGA) is disordered. Positions 488 to 515 (KSVEGEPLTKPEKGLSGAKKKDFPSKGA) are enriched in basic and acidic residues. The C2H2-type 3; atypical zinc finger occupies 614 to 637 (HQCHQCSFSTPDVDVLLFHYETVH). Residues 635-819 (TVHESQASDV…SLGLLTPVSS (185 aa)) are mediates interaction with GLI3. Residue lysine 645 forms a Glycyl lysine isopeptide (Lys-Gly) (interchain with G-Cter in SUMO2) linkage. 2 consecutive C2H2-type zinc fingers follow at residues 666–689 (HSCT…RRAH) and 692–715 (YKCR…NTVH). Residues lysine 737 and lysine 755 each participate in a glycyl lysine isopeptide (Lys-Gly) (interchain with G-Cter in SUMO2) cross-link. A Glycyl lysine isopeptide (Lys-Gly) (interchain with G-Cter in SUMO1); alternate cross-link involves residue lysine 766. A Glycyl lysine isopeptide (Lys-Gly) (interchain with G-Cter in SUMO2); alternate cross-link involves residue lysine 766. Residues lysine 825 and lysine 850 each participate in a glycyl lysine isopeptide (Lys-Gly) (interchain with G-Cter in SUMO2) cross-link. The tract at residues 856-885 (APAGSEKSASLTQQYPASGESKTKDESQSL) is disordered. Residues 862 to 871 (KSASLTQQYP) show a composition bias toward polar residues. Residues lysine 877 and lysine 879 each participate in a glycyl lysine isopeptide (Lys-Gly) (interchain with G-Cter in SUMO2) cross-link. Residues 896–920 (CANCLTTKTSLWRKNANGGYVCNAC) form a GATA-type zinc finger. Glycyl lysine isopeptide (Lys-Gly) (interchain with G-Cter in SUMO2) cross-links involve residues lysine 925, lysine 937, and lysine 965. Over residues 961 to 977 (EQLNKQQRGSGEEQVNG) the composition is skewed to polar residues. Positions 961–1000 (EQLNKQQRGSGEEQVNGSPLERRSEDHLSESHPREIPLPS) are disordered. Residue serine 978 is modified to Phosphoserine. Residues 980–995 (LERRSEDHLSESHPRE) show a composition bias toward basic and acidic residues. The mediates interaction with RNF4 stretch occupies residues 985–1184 (EDHLSESHPR…PTANGASKEK (200 aa)). Residues lysine 1003, lysine 1012, lysine 1030, and lysine 1040 each participate in a glycyl lysine isopeptide (Lys-Gly) (interchain with G-Cter in SUMO2) cross-link. Positions 1040–1049 (KSPQESTGDP) are enriched in polar residues. The tract at residues 1040-1078 (KSPQESTGDPGNSSSVSDGKGSSERGSPIEKYMRPAKHP) is disordered. The residue at position 1041 (serine 1041) is a Phosphoserine. Over residues 1050–1059 (GNSSSVSDGK) the composition is skewed to low complexity. Over residues 1060-1072 (GSSERGSPIEKYM) the composition is skewed to basic and acidic residues. Serine 1066 is subject to Phosphoserine. A Glycyl lysine isopeptide (Lys-Gly) (interchain with G-Cter in SUMO2) cross-link involves residue lysine 1070. At serine 1085 the chain carries Phosphoserine. Residues 1163 to 1281 (PLDLAIKHSR…QAEKNGKPKE (119 aa)) are transcriptional repressor domain. A disordered region spans residues 1169 to 1195 (KHSRPGPTANGASKEKTKAPPTVKNED). Residues lysine 1192 and lysine 1201 each participate in a glycyl lysine isopeptide (Lys-Gly) (interchain with G-Cter in SUMO2); alternate cross-link. Residues lysine 1192 and lysine 1201 each participate in a glycyl lysine isopeptide (Lys-Gly) (interchain with G-Cter in SUMO); alternate cross-link. Residue lysine 1201 forms a Glycyl lysine isopeptide (Lys-Gly) (interchain with G-Cter in SUMO1); alternate linkage. 2 consecutive C2H2-type zinc fingers follow at residues 1215-1237 (TKCV…MSCH) and 1243-1267 (FQCS…RGLH).

Interacts with RNF4; regulates TRPS1 repressor activity. Interacts specifically with the activator form of GLI3 (GLI3A) but not with the repressor form (GLI3R). Sumoylated. Sumoylation in the repressor domain inhibits the transcription repression activity. Sumoylation on Lys-1201 is the major site. Appears to be sumoylated on multiple sites. In the embryo, expression is detected in both visceral and skeletal tissues. Found in the maxilla, mandible, snout, prospective phalanges and in the femoral head within the developing hip. Also expressed in the hair follicles.

Its subcellular location is the nucleus. Its function is as follows. Transcriptional repressor. Binds specifically to GATA sequences and represses expression of GATA-regulated genes at selected sites and stages in vertebrate development. Regulates chondrocyte proliferation and differentiation. Executes multiple functions in proliferating chondrocytes, expanding the region of distal chondrocytes, activating proliferation in columnar cells and supporting the differentiation of columnar into hypertrophic chondrocytes. This Mus musculus (Mouse) protein is Zinc finger transcription factor Trps1 (Trps1).